Reading from the N-terminus, the 343-residue chain is Peroxisome assembly protein 12 (343 aa).

At 1–5 the chain is on the peroxisomal matrix side; that stretch reads MDSPS. A helical transmembrane segment spans residues 6-33; the sequence is LLEVLQVQQVEKLISPSLRFILAYFTHR. Residues 34–37 lie on the Cytoplasmic side of the membrane; the sequence is YPRF. The helical transmembrane segment at 38–62 threads the bilayer; the sequence is LLRAYNSFDGIYLLVKLLLEKSQLK. Residues 63-102 are Peroxisomal matrix-facing; it reads KWNATSVERRFQLKRVIAVRDSSIIAEEFPQESESATSLN. The chain crosses the membrane as a helical span at residues 103-140; the sequence is GIDVLKKLFLTYCIPYLLEKCESLTTVKENHTAVSILS. Topologically, residues 141–146 are cytoplasmic; the sequence is LQARDK. The chain crosses the membrane as a helical span at residues 147–193; sequence QKGALSVFYSKIKILLVRLKKILHFVFRLIRKSNTYLQWLYYLLYAL. Residues 194–238 lie on the Peroxisomal matrix side of the membrane; that stretch reads GKTPYTNLADHILRQRVIYNVENIHSRKLISTREKSSLLTSIADH. A helical transmembrane segment spans residues 239–266; it reads SMEGFLIIIQLIDWWQSNNYESHLKKGE. Over 267–343 the chain is Cytoplasmic; that stretch reads VAFTELAPPK…KGESFWRLMI (77 aa). The Zn(2+) site is built by Cys-289, Cys-292, Cys-309, and Cys-312. An RING-type; degenerate zinc finger spans residues 289–328; that stretch reads CKICGEKIKNPAVLSTGFVFCYPCIQVWLQRHPFKCPVTN.

Belongs to the pex2/pex10/pex12 family. As to quaternary structure, component of the PEX2-PEX10-PEX12 retrotranslocation channel, composed of PEX2, PEX10 and PEX12.

Its subcellular location is the peroxisome membrane. Its pathway is protein modification; protein ubiquitination. Its function is as follows. Component of a retrotranslocation channel required for peroxisome organization by mediating export of the PEX5 receptor from peroxisomes to the cytosol, thereby promoting PEX5 recycling. The retrotranslocation channel is composed of PEX2, PEX10 and PEX12; each subunit contributing transmembrane segments that coassemble into an open channel that specifically allows the passage of PEX5 through the peroxisomal membrane. PEX12 also regulates PEX5 recycling by activating the E3 ubiquitin-protein ligase activity of PEX10. When PEX5 recycling is compromised, PEX12 stimulates PEX10-mediated polyubiquitination of PEX5, leading to its subsequent degradation. The chain is Peroxisome assembly protein 12 (pex12) from Schizosaccharomyces pombe (strain 972 / ATCC 24843) (Fission yeast).